The sequence spans 234 residues: Endonuclease V (234 aa).

The Mg(2+) site is built by D46 and D116.

Belongs to the endonuclease V family. The cofactor is Mg(2+).

It localises to the cytoplasm. It catalyses the reaction Endonucleolytic cleavage at apurinic or apyrimidinic sites to products with a 5'-phosphate.. Its function is as follows. DNA repair enzyme involved in the repair of deaminated bases. Selectively cleaves double-stranded DNA at the second phosphodiester bond 3' to a deoxyinosine leaving behind the intact lesion on the nicked DNA. In Clostridium acetobutylicum (strain ATCC 824 / DSM 792 / JCM 1419 / IAM 19013 / LMG 5710 / NBRC 13948 / NRRL B-527 / VKM B-1787 / 2291 / W), this protein is Endonuclease V.